A 220-amino-acid polypeptide reads, in one-letter code: UPF0319 protein YccT (220 aa).

Residues 1 to 20 (MKTGIVTTLIALCLPVSVFA) form the signal peptide.

It belongs to the UPF0319 family.

The sequence is that of UPF0319 protein YccT from Escherichia coli O139:H28 (strain E24377A / ETEC).